The following is a 189-amino-acid chain: UPF0301 protein PFL_5830 (189 aa).

This sequence belongs to the UPF0301 (AlgH) family.

The sequence is that of UPF0301 protein PFL_5830 from Pseudomonas fluorescens (strain ATCC BAA-477 / NRRL B-23932 / Pf-5).